The primary structure comprises 401 residues: Phosrestin-1 (401 aa).

It belongs to the arrestin family. As to expression, inner and outer segments, and the inner plexiform regions of the retina.

Undergoes light-induced phosphorylation, probably plays an important role in the photoreceptor transduction. The sequence is that of Phosrestin-1 (Arr2) from Drosophila miranda (Fruit fly).